The chain runs to 366 residues: Ribosomal RNA large subunit methyltransferase M (366 aa).

Residues serine 188, 221-224, aspartate 240, aspartate 260, and aspartate 277 each bind S-adenosyl-L-methionine; that span reads CPGG. Lysine 306 functions as the Proton acceptor in the catalytic mechanism.

Belongs to the class I-like SAM-binding methyltransferase superfamily. RNA methyltransferase RlmE family. RlmM subfamily. Monomer.

The protein localises to the cytoplasm. The catalysed reaction is cytidine(2498) in 23S rRNA + S-adenosyl-L-methionine = 2'-O-methylcytidine(2498) in 23S rRNA + S-adenosyl-L-homocysteine + H(+). Functionally, catalyzes the 2'-O-methylation at nucleotide C2498 in 23S rRNA. The chain is Ribosomal RNA large subunit methyltransferase M from Salmonella heidelberg (strain SL476).